The sequence spans 226 residues: Enolase-phosphatase E1 (226 aa).

It belongs to the HAD-like hydrolase superfamily. MasA/MtnC family. As to quaternary structure, monomer. Requires Mg(2+) as cofactor.

It carries out the reaction 5-methylsulfanyl-2,3-dioxopentyl phosphate + H2O = 1,2-dihydroxy-5-(methylsulfanyl)pent-1-en-3-one + phosphate. The protein operates within amino-acid biosynthesis; L-methionine biosynthesis via salvage pathway; L-methionine from S-methyl-5-thio-alpha-D-ribose 1-phosphate: step 3/6. Its pathway is amino-acid biosynthesis; L-methionine biosynthesis via salvage pathway; L-methionine from S-methyl-5-thio-alpha-D-ribose 1-phosphate: step 4/6. Its function is as follows. Bifunctional enzyme that catalyzes the enolization of 2,3-diketo-5-methylthiopentyl-1-phosphate (DK-MTP-1-P) into the intermediate 2-hydroxy-3-keto-5-methylthiopentenyl-1-phosphate (HK-MTPenyl-1-P), which is then dephosphorylated to form the acireductone 1,2-dihydroxy-3-keto-5-methylthiopentene (DHK-MTPene). The protein is Enolase-phosphatase E1 of Shewanella amazonensis (strain ATCC BAA-1098 / SB2B).